The sequence spans 546 residues: Serine/threonine-protein kinase Chk2 (546 aa).

The interval 1 to 70 (MKSHHQSHSS…SSHSSSGTLS (70 aa)) is disordered. Residues 8 to 70 (HSSTSSKAHD…SSHSSSGTLS (63 aa)) show a composition bias toward low complexity. T68 bears the Phosphothreonine; by MAP3K20 mark. Residue S71 is modified to Phosphoserine; by PLK3. Position 77 is a phosphothreonine; by ATM and MAP3K20 (T77). Residue S82 is modified to Phosphoserine; by PLK3. An FHA domain is found at 117 to 179 (YWFGRDKSCE…NGTFVNTELI (63 aa)). The Protein kinase domain maps to 224 to 490 (YIMSKTLGSG…TEEALNHPWL (267 aa)). ATP-binding positions include 231 to 238 (GSGACGEV), K253, and 306 to 312 (ELMEGGE). D351 functions as the Proton acceptor in the catalytic mechanism. Residues 355 to 356 (EN) and D372 each bind ATP. The tract at residues 372–398 (DFGQSKILGETSLMRTLCGTPTYLAPE) is T-loop/activation segment. At S383 the chain carries Phosphoserine; by autocatalysis. Phosphothreonine; by autocatalysis occurs at positions 387 and 391. Residue S460 is modified to Phosphoserine.

This sequence belongs to the protein kinase superfamily. CAMK Ser/Thr protein kinase family. CHK2 subfamily. As to quaternary structure, homodimer. Homodimerization is part of the activation process but the dimer may dissociate following activation. Interacts with PML. Interacts with TP53. Interacts with RB1; phosphorylates RB1. Interacts with BRCA1. Interacts (phosphorylated at Thr-68) with MDC1; requires ATM-mediated phosphorylation of CHEK2. Interacts with TP53BP1; modulates CHEK2 phosphorylation at Thr-68 in response to ionizing radiation. Interacts with CDC25A; phosphorylates CDC25A and mediates its degradation in response to ionizing radiation. Interacts with CUL1; mediates CHEK2 ubiquitination and regulation. Interacts with CDKN2AIP. Interacts (via protein kinase domain) with CCAR2 (via N-terminus). Interacts with SIRT1. Mg(2+) is required as a cofactor. In terms of processing, phosphorylated. Phosphorylated at Ser-82 by PLK3 in response to DNA damage, promoting phosphorylation at Thr-77 by ATM and the G2/M transition checkpoint. Phosphorylation at Thr-77 induces homodimerization. Autophosphorylates at Thr-387 and Thr-391 in the T-loop/activation segment upon dimerization to become fully active. DNA damage-induced autophosphorylation at Ser-383 induces CUL1-mediated ubiquitination and regulates the pro-apoptotic function. Phosphorylation at Ser-460 also regulates ubiquitination. Phosphorylated by PLK4. Ubiquitinated. CUL1-mediated ubiquitination regulates the pro-apoptotic function. Ubiquitination may also regulate protein stability. Ubiquitinated by RNF8 via 'Lys-48'-linked ubiquitination. Ubiquitously expressed with higher levels in the thymus, spleen and colon (at protein level).

The protein localises to the nucleus. It is found in the PML body. The protein resides in the nucleoplasm. It catalyses the reaction L-seryl-[protein] + ATP = O-phospho-L-seryl-[protein] + ADP + H(+). The enzyme catalyses L-threonyl-[protein] + ATP = O-phospho-L-threonyl-[protein] + ADP + H(+). With respect to regulation, activated through phosphorylation at Thr-68 by ATM in response to DNA double-strand breaks. Activation is modulated by several mediators including MDC1 and TP53BP1. Induces homodimerization with exchange of the T-loop/activation segment between protomers and transphosphorylation of the protomers. The autophosphorylated kinase dimer is fully active. Negatively regulated by PPM1D through dephosphorylation of Thr-68. In terms of biological role, serine/threonine-protein kinase which is required for checkpoint-mediated cell cycle arrest, activation of DNA repair and apoptosis in response to the presence of DNA double-strand breaks. May also negatively regulate cell cycle progression during unperturbed cell cycles. Following activation, phosphorylates numerous effectors preferentially at the consensus sequence [L-X-R-X-X-S/T]. Regulates cell cycle checkpoint arrest through phosphorylation of CDC25A, CDC25B and CDC25C, inhibiting their activity. Inhibition of CDC25 phosphatase activity leads to increased inhibitory tyrosine phosphorylation of CDK-cyclin complexes and blocks cell cycle progression. May also phosphorylate NEK6 which is involved in G2/M cell cycle arrest. Regulates DNA repair through phosphorylation of BRCA2, enhancing the association of RAD51 with chromatin which promotes DNA repair by homologous recombination. Also stimulates the transcription of genes involved in DNA repair (including BRCA2) through the phosphorylation and activation of the transcription factor FOXM1. Regulates apoptosis through the phosphorylation of p53/TP53, MDM4 and PML. Phosphorylation of p53/TP53 at 'Ser-20' by CHEK2 may alleviate inhibition by MDM2, leading to accumulation of active p53/TP53. Phosphorylation of MDM4 may also reduce degradation of p53/TP53. Also controls the transcription of pro-apoptotic genes through phosphorylation of the transcription factor E2F1. Tumor suppressor, it may also have a DNA damage-independent function in mitotic spindle assembly by phosphorylating BRCA1. Its absence may be a cause of the chromosomal instability observed in some cancer cells. Promotes the CCAR2-SIRT1 association and is required for CCAR2-mediated SIRT1 inhibition. Under oxidative stress, promotes ATG7 ubiquitination by phosphorylating the E3 ubiquitin ligase TRIM32 at 'Ser-56' leading to positive regulation of the autophagosme assembly. This chain is Serine/threonine-protein kinase Chk2, found in Mus musculus (Mouse).